We begin with the raw amino-acid sequence, 122 residues long: Large ribosomal subunit protein uL14 (122 aa).

It belongs to the universal ribosomal protein uL14 family. In terms of assembly, part of the 50S ribosomal subunit. Forms a cluster with proteins L3 and L19. In the 70S ribosome, L14 and L19 interact and together make contacts with the 16S rRNA in bridges B5 and B8.

In terms of biological role, binds to 23S rRNA. Forms part of two intersubunit bridges in the 70S ribosome. This is Large ribosomal subunit protein uL14 from Lactococcus lactis subsp. lactis (strain IL1403) (Streptococcus lactis).